The following is a 505-amino-acid chain: Maturase K (505 aa).

The protein belongs to the intron maturase 2 family. MatK subfamily.

It localises to the plastid. The protein resides in the chloroplast. Its function is as follows. Usually encoded in the trnK tRNA gene intron. Probably assists in splicing its own and other chloroplast group II introns. The protein is Maturase K of Portulacaria afra (Elephant's food).